The chain runs to 205 residues: Potassium-transporting ATPase KdpC subunit (205 aa).

Residues 7 to 27 (PAIVILVALTIITGLIYPLAM) form a helical membrane-spanning segment.

It belongs to the KdpC family. In terms of assembly, the system is composed of three essential subunits: KdpA, KdpB and KdpC.

It localises to the cell inner membrane. Part of the high-affinity ATP-driven potassium transport (or Kdp) system, which catalyzes the hydrolysis of ATP coupled with the electrogenic transport of potassium into the cytoplasm. This subunit acts as a catalytic chaperone that increases the ATP-binding affinity of the ATP-hydrolyzing subunit KdpB by the formation of a transient KdpB/KdpC/ATP ternary complex. This is Potassium-transporting ATPase KdpC subunit from Nitrobacter hamburgensis (strain DSM 10229 / NCIMB 13809 / X14).